The following is a 132-amino-acid chain: Small ribosomal subunit protein uS11 (132 aa).

Belongs to the universal ribosomal protein uS11 family. In terms of assembly, part of the 30S ribosomal subunit. Interacts with proteins S7 and S18. Binds to IF-3.

Located on the platform of the 30S subunit, it bridges several disparate RNA helices of the 16S rRNA. Forms part of the Shine-Dalgarno cleft in the 70S ribosome. This is Small ribosomal subunit protein uS11 from Chlamydia caviae (strain ATCC VR-813 / DSM 19441 / 03DC25 / GPIC) (Chlamydophila caviae).